Consider the following 380-residue polypeptide: Alcohol dehydrogenase 1 (380 aa).

Zn(2+) contacts are provided by C48, T50, H70, C100, C103, C106, C114, and C178. An alcohol is bound by residues T50 and H70. Residue T50 coordinates NAD(+). Residues 203–208 (GLGAVG), D227, R232, T273, V296, 296–298 (VGV), and R373 each bind NAD(+).

This sequence belongs to the zinc-containing alcohol dehydrogenase family. Homodimer. Requires Zn(2+) as cofactor.

Its subcellular location is the cytoplasm. The enzyme catalyses a primary alcohol + NAD(+) = an aldehyde + NADH + H(+). The catalysed reaction is a secondary alcohol + NAD(+) = a ketone + NADH + H(+). This is Alcohol dehydrogenase 1 from Pisum sativum (Garden pea).